The sequence spans 412 residues: NF-kappa-B essential modulator (412 aa).

The tract at residues M1–P48 is disordered. The tract at residues M1–V197 is required for interaction with and ubiquitination by MARCHF2. Phosphoserine; by IKKB is present on residues S31 and S43. The interaction with CHUK/IKBKB stretch occupies residues E44 to K111. Positions E49–S343 form a coiled coil. S68 is subject to Phosphoserine. S85 is modified (phosphoserine; by ATM). Residues K111, K139, K143, K226, and K246 each participate in a glycyl lysine isopeptide (Lys-Gly) (interchain with G-Cter in ubiquitin) cross-link. The interval L150–G250 is interaction with TANK. Residues D242 to S343 form a ubiquitin-binding (UBAN) region. Residues K246–Q358 form a self-association region. The interval K249–E412 is required for interaction with TNFAIP3. K270 participates in a covalent cross-link: Glycyl lysine isopeptide (Lys-Gly) (interchain with G-Cter in SUMO); alternate. A Glycyl lysine isopeptide (Lys-Gly) (interchain with G-Cter in ubiquitin); alternate cross-link involves residue K270. Residues K276, K278, K285, and K295 each participate in a glycyl lysine isopeptide (Lys-Gly) (interchain with G-Cter in ubiquitin) cross-link. Residue K302 forms a Glycyl lysine isopeptide (Lys-Gly) (interchain with G-Cter in SUMO); alternate linkage. Residue K302 forms a Glycyl lysine isopeptide (Lys-Gly) (interchain with G-Cter in ubiquitin); alternate linkage. Residues K314 and K319 each participate in a glycyl lysine isopeptide (Lys-Gly) (interchain with G-Cter in ubiquitin) cross-link. Residues L315–L336 form a leucine-zipper region. S369 is modified (phosphoserine; by IKKB). Residues S375–E412 are interaction with CYLD. S380 carries the post-translational modification Phosphoserine. The CCHC NOA-type zinc finger occupies P382–E412. C390 serves as a coordination point for Zn(2+). K392 participates in a covalent cross-link: Glycyl lysine isopeptide (Lys-Gly) (interchain with G-Cter in ubiquitin). Zn(2+) is bound by residues C393, H406, and C410.

In terms of assembly, homodimer; disulfide-linked. Component of the I-kappa-B-kinase (IKK) core complex consisting of CHUK, IKBKB and IKBKG; probably four alpha/CHUK-beta/IKBKB dimers are associated with four gamma/IKBKG subunits. The IKK core complex seems to associate with regulatory or adapter proteins to form a IKK-signalosome holo-complex. The IKK complex associates with TERF2IP/RAP1, leading to promote IKK-mediated phosphorylation of RELA/p65. Part of a complex composed of NCOA2, NCOA3, CHUK/IKKA, IKBKB, IKBKG and CREBBP. Interacts with COPS3, CYLD, NALP2, TRPC4AP and PIDD1. Interacts with ATM; the complex is exported from the nucleus. Interacts with TRAF6. Interacts with IKBKE. Interacts with TANK; the interaction is enhanced by IKBKE and TBK1. Part of a ternary complex consisting of TANK, IKBKB and IKBKG. Interacts with ZFAND5. Interacts with RIPK2. Interacts with TNIP1 and TNFAIP3; TNIP1 facilitates the TNFAIP3-mediated de-ubiquitination of IKBKG. Interacts with TNFAIP3; the interaction is induced by TNF stimulation and by polyubiquitin. Binds (via UBAN region) polyubiquitin; binds both 'Lys-63'-linked and linear polyubiquitin, with higher affinity for linear ubiquitin. Interacts with NLRP10. Interacts with TANK; this interaction increases in response to DNA damage. Interacts with USP10; this interaction increases in response to DNA damage. Interacts with ZC3H12A; this interaction increases in response to DNA damage. Interacts with IFIT5; the interaction synergizes the recruitment of IKK to MAP3K7 and enhances IKK phosphorylation. Interacts with TRIM29; this interaction induces IKBKG/NEMO ubiquitination and proteolytic degradation. Interacts with TRIM13; this interaction leads to IKBKG/NEMO ubiquitination. Interacts with ARFIP2. Interacts with RIPK1. Interacts with (ubiquitinated) BCL10; interaction with polyubiquitinated BCL10 via both 'Lys-63'-linked and linear ubiquitin is required for TCR-induced NF-kappa-B activation. Interacts with MARCHF2; during the late stages of macrophage viral and bacterial infection; the interaction leads to ubiquitination and degradation of IKBKG/NEMO. In terms of processing, phosphorylation at Ser-68 attenuates aminoterminal homodimerization. Polyubiquitinated on Lys-278 via 'Lys-63'-linked ubiquitin; the ubiquitination is mediated downstream of NOD2 and RIPK2 and probably plays a role in signaling by facilitating interactions with ubiquitin domain-containing proteins and activates the NF-kappa-B pathway. Polyubiquitinated on Lys-278 and Lys-302 through 'Lys-63'-linked ubiquitin; the ubiquitination is mediated by BCL10, MALT1 and TRAF6 and probably plays a role in signaling by facilitating interactions with ubiquitin domain-containing proteins and activates the NF-kappa-B pathway. Monoubiquitinated on Lys-270 and Lys-302; promotes nuclear export. Polyubiquitinated through 'Lys-27' by TRIM23; involved in antiviral innate and inflammatory responses. Linear polyubiquitinated on Lys-111, Lys-143, Lys-226, Lys-246, Lys-270, Lys-278, Lys-285, Lys-295, Lys-302 and Lys-319; the head-to-tail polyubiquitination is mediated by the LUBAC complex and plays a key role in NF-kappa-B activation. Deubiquitinated by USP10 in a TANK-dependent and -independent manner, leading to the negative regulation of NF-kappa-B signaling upon DNA damage. Ubiquitinated at Lys-319 by MARCHF2 following bacterial and viral infection which leads to its degradation. Polyubiquitinated via 'Lys-29'-linked ubiquitin; leading to lysosomal degradation. Post-translationally, sumoylated on Lys-270 and Lys-302 with SUMO1; the modification results in phosphorylation of Ser-85 by ATM leading to a replacement of the sumoylation by mono-ubiquitination on these residues. In terms of processing, neddylated by TRIM40, resulting in stabilization of NFKBIA and down-regulation of NF-kappa-B activity.

It is found in the cytoplasm. The protein localises to the nucleus. Regulatory subunit of the IKK core complex which phosphorylates inhibitors of NF-kappa-B thus leading to the dissociation of the inhibitor/NF-kappa-B complex and ultimately the degradation of the inhibitor. Its binding to scaffolding polyubiquitin plays a key role in IKK activation by multiple signaling receptor pathways. Can recognize and bind both 'Lys-63'-linked and linear polyubiquitin upon cell stimulation, with a much highr affinity for linear polyubiquitin. Could be implicated in NF-kappa-B-mediated protection from cytokine toxicity. Essential for viral activation of IRF3. Involved in TLR3- and IFIH1-mediated antiviral innate response; this function requires 'Lys-27'-linked polyubiquitination. The polypeptide is NF-kappa-B essential modulator (Ikbkg) (Rattus norvegicus (Rat)).